Here is a 410-residue protein sequence, read N- to C-terminus: Ribulose bisphosphate carboxylase large chain (410 aa).

Positions 100 and 150 each coordinate substrate. The active-site Proton acceptor is Lys-152. Lys-154 is a substrate binding site. Positions 178, 180, and 181 each coordinate Mg(2+). Lys-178 is subject to N6-carboxylysine. Catalysis depends on His-271, which acts as the Proton acceptor. Substrate is bound by residues Arg-272, His-304, and Ser-356.

This sequence belongs to the RuBisCO large chain family. Type I subfamily. As to quaternary structure, heterohexadecamer of 8 large chains and 8 small chains; disulfide-linked. The disulfide link is formed within the large subunit homodimers. Mg(2+) serves as cofactor. In terms of processing, the disulfide bond which can form in the large chain dimeric partners within the hexadecamer appears to be associated with oxidative stress and protein turnover.

It is found in the plastid. The protein resides in the chloroplast. It carries out the reaction 2 (2R)-3-phosphoglycerate + 2 H(+) = D-ribulose 1,5-bisphosphate + CO2 + H2O. The enzyme catalyses D-ribulose 1,5-bisphosphate + O2 = 2-phosphoglycolate + (2R)-3-phosphoglycerate + 2 H(+). In terms of biological role, ruBisCO catalyzes two reactions: the carboxylation of D-ribulose 1,5-bisphosphate, the primary event in carbon dioxide fixation, as well as the oxidative fragmentation of the pentose substrate in the photorespiration process. Both reactions occur simultaneously and in competition at the same active site. The sequence is that of Ribulose bisphosphate carboxylase large chain (rbcL) from Gleichenia japonica (Urajiro).